Reading from the N-terminus, the 98-residue chain is UPF0213 protein LACR_2011 (98 aa).

A GIY-YIG domain is found at 2–79; that stretch reads NTHFTYVLQC…KLVRQQKLKL (78 aa).

The protein belongs to the UPF0213 family.

The sequence is that of UPF0213 protein LACR_2011 from Lactococcus lactis subsp. cremoris (strain SK11).